Reading from the N-terminus, the 576-residue chain is 4-alpha-glucanotransferase DPE1, chloroplastic/amyloplastic (576 aa).

A chloroplast-targeting transit peptide spans 1 to 45; it reads MSILLRPSSSPSLCSSLKLFRLSSPDSLIDAAVLRNRTKPSQSFR.

The protein belongs to the disproportionating enzyme family.

It is found in the plastid. It localises to the chloroplast. The protein localises to the amyloplast. The enzyme catalyses Transfers a segment of a (1-&gt;4)-alpha-D-glucan to a new position in an acceptor, which may be glucose or a (1-&gt;4)-alpha-D-glucan.. Functionally, chloroplastic alpha-glucanotransferase involved in maltotriose metabolism. Probably uses maltotriose as substrate to transfer a maltosyl unit from one molecule to another, resulting in glucose and maltopentaose. The latter can then be further metabolized to maltose and maltotriose by beta-amylase. Required for normal starch degradation in leaves. This chain is 4-alpha-glucanotransferase DPE1, chloroplastic/amyloplastic (DPE1), found in Arabidopsis thaliana (Mouse-ear cress).